The sequence spans 465 residues: MRFMQRSKDSLAKWLSAILPVVIVGLVGLFAVTVIRDYGRASEADRQALLEKGNVLIRALESGSRVGMGMRMHHVQQQALLEEMAGQPGVLWFAVTDAQGIIILHSDPDKVGRALYSPDEMQKLKPEENSRWRLLGKTETTPALEVYRLFQPMSAPWRHGMHNMPRCNGKAVPQVDAQQAIFIAVDASDLVATQSGEKRNTLIILFALATVLLASVLSFFWYRRYLRSRQLLQDEMKRKEKLVALGHLAAGVAHEIRNPLSSIKGLAKYFAERAPAGGEAHQLAQVMAKEADRLNRVVSELLELVKPTHLALQAVDLNTLINHSLQLVSQDANSREIQLRFTANDTLPEIQADPDRLTQVLLNLYLNAIQAIGQHGVISVTASESGAGVKISVTDSGKGIAADQLDAIFTPYFTTKAEGTGLGLAVVHNIVEQHGGTIQVASQEGKGSTFTLWLPVNITRKDPQG.

Topologically, residues 1–14 (MRFMQRSKDSLAKW) are cytoplasmic. Residues 15 to 35 (LSAILPVVIVGLVGLFAVTVI) form a helical membrane-spanning segment. Topologically, residues 36 to 201 (RDYGRASEAD…ATQSGEKRNT (166 aa)) are periplasmic. Residues 202-222 (LIILFALATVLLASVLSFFWY) traverse the membrane as a helical segment. Residues 223–465 (RRYLRSRQLL…VNITRKDPQG (243 aa)) lie on the Cytoplasmic side of the membrane. Positions 251–458 (GVAHEIRNPL…TFTLWLPVNI (208 aa)) constitute a Histidine kinase domain. The residue at position 254 (histidine 254) is a Phosphohistidine; by autocatalysis.

In terms of processing, autophosphorylated.

It localises to the cell inner membrane. It carries out the reaction ATP + protein L-histidine = ADP + protein N-phospho-L-histidine.. Its activity is regulated as follows. Activity of the ZraS/ZraR two-component system is repressed by the zinc-bound form of ZraP, which probably interacts with the periplasmic region of ZraS. Part of the Zra signaling pathway, an envelope stress response (ESR) system composed of the periplasmic accessory protein ZraP, the histidine kinase ZraS and the transcriptional regulator ZraR. The ZraPSR system contributes to antibiotic resistance and is important for membrane integrity in the presence of membrane-targeting biocides. ZraS is a member of the two-component regulatory system ZraS/ZraR. Functions as a membrane-associated sensor kinase that phosphorylates ZraR in response to high concentrations of Zn(2+) or Pb(2+) in the medium. Binds one zinc molecule with high affinity via its periplasmic domain, inducing a conformational change that is transmitted to the histidine kinase domain and leads to the activation of ZraR. The system has no direct role in zinc or copper resistance. The chain is Sensor histidine kinase ZraS from Escherichia coli (strain K12).